Reading from the N-terminus, the 260-residue chain is uncharacterized protein (260 aa).

The PNPLA domain maps to leucine 8–lysine 166. A GXSXG motif is present at residues glycine 39–glycine 43. Serine 41 (nucleophile) is an active-site residue. Aspartate 153 acts as the Proton acceptor in catalysis. The DGA/G signature appears at aspartate 153–alanine 155.

The protein belongs to the NTE family.

This is an uncharacterized protein from Bacillus subtilis (strain 168).